Here is a 126-residue protein sequence, read N- to C-terminus: Fluoride-specific ion channel FluC (126 aa).

A run of 4 helical transmembrane segments spans residues 2-22, 37-57, 65-85, and 101-121; these read LTFAPLNFLAIGVGATLGAWL, WGTLTANLVGGYLIGVMVALI, AWIRLAAVTGFLGGLTTFSTF, and AAAYAGASLAGSLAMTGLATV. Residues G77 and T80 each coordinate Na(+).

It belongs to the fluoride channel Fluc/FEX (TC 1.A.43) family.

Its subcellular location is the cell inner membrane. It carries out the reaction fluoride(in) = fluoride(out). Na(+) is not transported, but it plays an essential structural role and its presence is essential for fluoride channel function. Its function is as follows. Fluoride-specific ion channel. Important for reducing fluoride concentration in the cell, thus reducing its toxicity. The chain is Fluoride-specific ion channel FluC from Bordetella parapertussis (strain 12822 / ATCC BAA-587 / NCTC 13253).